The chain runs to 337 residues: Ketol-acid reductoisomerase (NADP(+)) (337 aa).

Residues 3–183 (VEMFYDDDAD…GGARAGVIKT (181 aa)) form the KARI N-terminal Rossmann domain. NADP(+) contacts are provided by residues 26–29 (YGSQ), K49, S52, S54, and 84–87 (DTAQ). The active site involves H109. Position 135 (G135) interacts with NADP(+). The KARI C-terminal knotted domain occupies 184–329 (TFKEETETDL…KKLRDLMSWV (146 aa)). Residues D192, E196, E228, and E232 each contribute to the Mg(2+) site. S253 provides a ligand contact to substrate.

This sequence belongs to the ketol-acid reductoisomerase family. Requires Mg(2+) as cofactor.

It catalyses the reaction (2R)-2,3-dihydroxy-3-methylbutanoate + NADP(+) = (2S)-2-acetolactate + NADPH + H(+). The catalysed reaction is (2R,3R)-2,3-dihydroxy-3-methylpentanoate + NADP(+) = (S)-2-ethyl-2-hydroxy-3-oxobutanoate + NADPH + H(+). Its pathway is amino-acid biosynthesis; L-isoleucine biosynthesis; L-isoleucine from 2-oxobutanoate: step 2/4. The protein operates within amino-acid biosynthesis; L-valine biosynthesis; L-valine from pyruvate: step 2/4. Its function is as follows. Involved in the biosynthesis of branched-chain amino acids (BCAA). Catalyzes an alkyl-migration followed by a ketol-acid reduction of (S)-2-acetolactate (S2AL) to yield (R)-2,3-dihydroxy-isovalerate. In the isomerase reaction, S2AL is rearranged via a Mg-dependent methyl migration to produce 3-hydroxy-3-methyl-2-ketobutyrate (HMKB). In the reductase reaction, this 2-ketoacid undergoes a metal-dependent reduction by NADPH to yield (R)-2,3-dihydroxy-isovalerate. The chain is Ketol-acid reductoisomerase (NADP(+)) from Mycolicibacterium smegmatis (strain ATCC 700084 / mc(2)155) (Mycobacterium smegmatis).